We begin with the raw amino-acid sequence, 217 residues long: Uridylate kinase (217 aa).

An ATP-binding site is contributed by 5 to 9 (KLTGR). Gly37 contacts UMP. Residues Gly38 and Arg42 each coordinate ATP. UMP contacts are provided by residues Asp59 and 107 to 113 (FQPGQST). The ATP site is built by Asn134, Tyr139, and Asp142.

This sequence belongs to the UMP kinase family. As to quaternary structure, homohexamer.

It is found in the cytoplasm. It catalyses the reaction UMP + ATP = UDP + ADP. It participates in pyrimidine metabolism; CTP biosynthesis via de novo pathway; UDP from UMP (UMPK route): step 1/1. Inhibited by UTP. Catalyzes the reversible phosphorylation of UMP to UDP. This Pyrobaculum calidifontis (strain DSM 21063 / JCM 11548 / VA1) protein is Uridylate kinase.